A 509-amino-acid polypeptide reads, in one-letter code: Apurinic-apyrimidinic endonuclease 1 (509 aa).

The N-terminal stretch at 1 to 24 is a signal peptide; sequence MPRHCCCFVFHFLLYMLLINIVKN. The interval 144-188 is disordered; it reads EEKDEECDEKTKQDNNKENIKNETIVQKKKIDKNNKTKEKIKTKS. 2 stretches are compositionally biased toward basic and acidic residues: residues 152–164 and 175–188; these read EKTK…ENIK and DKNN…KTKS. H291, H331, E367, D401, H404, H438, D451, H453, and E483 together coordinate Zn(2+). H404 contacts Mn(2+). D451 and H453 together coordinate Mn(2+).

This sequence belongs to the AP endonuclease 2 family. Zn(2+) serves as cofactor. The cofactor is Mn(2+). Post-translationally, may be proteolytically cleaved.

The protein localises to the mitochondrion. Its function is as follows. Plays a role in mitochondrial DNA base excision repair (BER) pathway induced by oxidative stress. Has apurinic/apyrimidinic (AP) endonuclease activity towards double-stranded DNA (dsDNA) with a preference for C as opposite base. Has 3'-phosphatase activity; removes 3'-phosphate from blunt-end, recessed, and gapped DNA templates and thus, removes 3'-blocks for DNA polymerase activity during BER. Lacks 3'-5' exonuclease activity and does not cleave damaged bases by nucleotide incision repair (NIR). The chain is Apurinic-apyrimidinic endonuclease 1 from Plasmodium berghei (strain Anka).